The primary structure comprises 116 residues: Large ribosomal subunit protein bL20 (116 aa).

It belongs to the bacterial ribosomal protein bL20 family.

Functionally, binds directly to 23S ribosomal RNA and is necessary for the in vitro assembly process of the 50S ribosomal subunit. It is not involved in the protein synthesizing functions of that subunit. The protein is Large ribosomal subunit protein bL20 of Mycoplasmopsis pulmonis (strain UAB CTIP) (Mycoplasma pulmonis).